The following is a 330-amino-acid chain: Aspartate--ammonia ligase (330 aa).

Belongs to the class-II aminoacyl-tRNA synthetase family. AsnA subfamily.

The protein localises to the cytoplasm. It catalyses the reaction L-aspartate + NH4(+) + ATP = L-asparagine + AMP + diphosphate + H(+). It participates in amino-acid biosynthesis; L-asparagine biosynthesis; L-asparagine from L-aspartate (ammonia route): step 1/1. The chain is Aspartate--ammonia ligase from Aeromonas salmonicida (strain A449).